The primary structure comprises 378 residues: MQSAIKSVEYDRPLAAGAACGVGEAWAKVPDALAPDERDALKARIKALLVREKAVLVAHYYVDADLQALADETGGCVADSLEMARFGRDHDAHTLVVAGVRFMGETAKILSPGKRVLMPDLDATCSLDLGCLVDEFSQFCDAHPERTVVVYANTSAAVKARADWMVTSSIGLEIVADLHARGEKIIWAPDRHLGGYIQKKTGADMLMWQGSCLVHDEFKGIELDLLRREYPDAKILVHPESPEGVVALADVVGSTTQLIDAAVKLDAQRFIVATDLGILHKMRLAAPGKTFIEAPTAGNSATCKSCAHCPWMAMNALSNLADVLERGHNEIFVEAAIAQRARMPIDRMLDFAARHKQRVQASGDLQRDQALFANVGAA.

Iminosuccinate contacts are provided by histidine 59 and serine 80. Cysteine 125 is a binding site for [4Fe-4S] cluster. Residues 151 to 153 (YAN) and serine 168 contribute to the iminosuccinate site. [4Fe-4S] cluster is bound at residue cysteine 212. Residues 238-240 (HPE) and threonine 255 each bind iminosuccinate. Residue cysteine 309 coordinates [4Fe-4S] cluster.

It belongs to the quinolinate synthase family. Type 1 subfamily. It depends on [4Fe-4S] cluster as a cofactor.

It is found in the cytoplasm. The enzyme catalyses iminosuccinate + dihydroxyacetone phosphate = quinolinate + phosphate + 2 H2O + H(+). The protein operates within cofactor biosynthesis; NAD(+) biosynthesis; quinolinate from iminoaspartate: step 1/1. Catalyzes the condensation of iminoaspartate with dihydroxyacetone phosphate to form quinolinate. The protein is Quinolinate synthase of Burkholderia pseudomallei (strain 1106a).